The following is a 447-amino-acid chain: Putative branched-chain amino acid carrier protein SAB1263c (447 aa).

Helical transmembrane passes span 6 to 26 (WVIG…IFPP), 40 to 60 (ILAF…VGAL), 74 to 94 (PKFS…LFAI), 114 to 134 (SSIA…YICL), 143 to 163 (IGSL…IKGY), 193 to 213 (GYLT…VNAV), 229 to 249 (LTAG…LGYI), 290 to 310 (LLGI…IGAV), 326 to 346 (FVLV…NAVI), 350 to 370 (IPVL…ILIA), 382 to 402 (IPVI…LGWL), and 417 to 437 (LEWF…GIFV).

Belongs to the branched chain amino acid transporter family.

It is found in the cell membrane. In terms of biological role, component of the transport system for branched-chain amino acids (leucine, isoleucine and valine), which is coupled to a proton motive force (Potential). Contributes to NaCl tolerance. The sequence is that of Putative branched-chain amino acid carrier protein SAB1263c from Staphylococcus aureus (strain bovine RF122 / ET3-1).